The primary structure comprises 114 residues: Cytochrome c2 (114 aa).

Residue Q1 is modified to Pyrrolidone carboxylic acid. The heme c site is built by C13, C16, H17, and M93.

Belongs to the cytochrome c family. Binds 1 heme c group covalently per subunit.

It is found in the periplasm. Cytochrome c2 is found mainly in purple, non-sulfur, photosynthetic bacteria where it functions as the electron donor to the oxidized bacteriochlorophyll in the photophosphorylation pathway. However, it may also have a role in the respiratory chain and is found in some non-photosynthetic bacteria. The chain is Cytochrome c2 from Rhodopseudomonas palustris.